We begin with the raw amino-acid sequence, 203 residues long: Suppressor/enhancer of lin-12 protein 9 (203 aa).

The first 18 residues, 1-18 (MNSLTWILAVLFVTPAAS), serve as a signal peptide directing secretion. Over 19 to 170 (YFIHVDANEE…RNINENTNSR (152 aa)) the chain is Lumenal. One can recognise a GOLD domain in the interval 28–110 (EQCFFDRLTS…PKAVMFTVEI (83 aa)). Residues 171-191 (VVMWAAFEAFVLVGMTVGQIF) form a helical membrane-spanning segment. Residues 192-203 (YLKRFFEVRTMV) are Cytoplasmic-facing.

The protein belongs to the EMP24/GP25L family.

It localises to the cytoplasmic vesicle membrane. The protein localises to the cytoplasmic vesicle. It is found in the COPI-coated vesicle membrane. The protein resides in the golgi apparatus membrane. Its function is as follows. May have a role in the negative regulation of lin-12 and glp-1 transport to the cell surface. May also have a role in a quality control mechanism for endoplasmic reticulum-Golgi transport; the budding of coatomer-coated and other species of coated vesicles, could bind cargo molecules to collect them into budding vesicles. Involved in regulating the expression of proteasomal subunits such as rpt-3 in order to confer resistance to proteasomal dysfunction. This is Suppressor/enhancer of lin-12 protein 9 (sel-9) from Caenorhabditis elegans.